Reading from the N-terminus, the 320-residue chain is MSVDTANPTSPMMETHEQIFAQDPDFWKNYRRGRPQVPYSFFQRIYNYHQGHSGRFETVHDAGAGNGVYSKELRSKFHHVIVSDVVAENVRQAEERLGTEGYSFRVGKMEELDEIPAASVDMVFVMNAMHWADDQTRAMRAIAAQLRPGGTFACAGFGPARFRDARVQDVWERISQQGGRLLLQTANQPVDTINVMVRSQDHYNVAPLDERLFRQRALRIYLNQETGGLTGLLPPERRGEVTEPDHEGPHDQITFEHDDEWRFDMDLDGFKEHFRTFPHAFRDPEAFTSLWQEIEELVRQGSRLDGAWPVTLILATRTNA.

A methyltransferase domain region spans residues 61-154; the sequence is DAGAGNGVYS…QLRPGGTFAC (94 aa). Positions 231–252 are disordered; the sequence is GLLPPERRGEVTEPDHEGPHDQ. Positions 235 to 252 are enriched in basic and acidic residues; that stretch reads PERRGEVTEPDHEGPHDQ.

This sequence belongs to the methyltransferase superfamily.

It participates in secondary metabolite biosynthesis. Methyltransferase; part of the gene cluster that mediates the biosynthesis of geodin, an intermediate in the biosynthesis of other natural products. The pathway begins with the synthesis of atrochrysone thioester by the polyketide synthase (PKS) gedC. The atrochrysone carboxyl ACP thioesterase gedB then breaks the thioester bond and releases the atrochrysone carboxylic acid from gedC. The atrochrysone carboxylic acid is then converted to atrochrysone which is further transformed into emodinanthrone. The next step is performed by the emodinanthrone oxygenase gedH that catalyzes the oxidation of emodinanthrone to emodin. Emodin O-methyltransferase encoded probably by gedA then catalyzes methylation of the 8-hydroxy group of emodin to form questin. Ring cleavage of questin by questin oxidase gedK leads to desmethylsulochrin via several intermediates including questin epoxide. Another methylation step probably catalyzed by methyltransferase gedG leads to the formation of sulochrin which is further converted to dihydrogeodin by the sulochrin halogenase gedL. Finally, the dihydrogeodin oxidase gedJ catalyzes the stereospecific phenol oxidative coupling reaction converting dihydrogeodin to geodin. The polypeptide is Methyltransferase gedG (Aspergillus terreus (strain NIH 2624 / FGSC A1156)).